We begin with the raw amino-acid sequence, 448 residues long: Tubulin alpha-2 chain (448 aa).

Residues glutamine 11, glutamate 69, serine 138, glycine 142, threonine 143, threonine 177, asparagine 204, and asparagine 226 each contribute to the GTP site. A Mg(2+)-binding site is contributed by glutamate 69. The active site involves glutamate 252. The tract at residues 428–448 is disordered; that stretch reads KDYEEVGADSNEGGEEEGEEY. Residues 429 to 448 are compositionally biased toward acidic residues; the sequence is DYEEVGADSNEGGEEEGEEY.

Belongs to the tubulin family. In terms of assembly, dimer of alpha and beta chains. A typical microtubule is a hollow water-filled tube with an outer diameter of 25 nm and an inner diameter of 15 nM. Alpha-beta heterodimers associate head-to-tail to form protofilaments running lengthwise along the microtubule wall with the beta-tubulin subunit facing the microtubule plus end conferring a structural polarity. Microtubules usually have 13 protofilaments but different protofilament numbers can be found in some organisms and specialized cells. Requires Mg(2+) as cofactor. In terms of processing, undergoes a tyrosination/detyrosination cycle, the cyclic removal and re-addition of a C-terminal tyrosine residue. Expressed in intestine, pharyngeal muscle cells, and a subset of neurons.

Its subcellular location is the cytoplasm. It is found in the cytoskeleton. It carries out the reaction GTP + H2O = GDP + phosphate + H(+). Tubulin is the major constituent of microtubules, a cylinder consisting of laterally associated linear protofilaments composed of alpha- and beta-tubulin heterodimers. Microtubules grow by the addition of GTP-tubulin dimers to the microtubule end, where a stabilizing cap forms. Below the cap, tubulin dimers are in GDP-bound state, owing to GTPase activity of alpha-tubulin. Required for the normal dynamic behavior of the non-centrosomal microtubules in the epidermal syncytium. Involved in the redistribution of microtubule end-binding protein EB1/ebp-2 caused by wounding. Required to modulate expression in the epidermis of antimicrobial peptides, such as nlp-29, after wounding, or fungal infection. This is Tubulin alpha-2 chain (tba-2) from Caenorhabditis elegans.